A 1258-amino-acid chain; its full sequence is Serine/threonine-protein kinase Nek1 (1258 aa).

A Protein kinase domain is found at 4-258; it reads YVRLQKIGEG…VNSILEKGFI (255 aa). Residues 10–18 and Lys33 contribute to the ATP site; that span reads IGEGSFGKA. The Proton acceptor role is filled by Asp128. Thr156 carries the phosphothreonine modification. Thr162 is modified (phosphothreonine; by autocatalysis). Residues 330–360 are disordered; the sequence is HEKKPLQKHKQAHQTPEKRVNTGEERRKISE. Positions 344–360 are enriched in basic and acidic residues; that stretch reads TPEKRVNTGEERRKISE. Phosphoserine occurs at positions 414, 418, 428, and 438. 3 disordered regions span residues 578 to 600, 648 to 669, and 685 to 704; these read KLRGEKKEANHSEGQEGSEEADM, KSSDVSPPLGQHETGGSPSKQQ, and VDSSLTDTRETSEEMQKTNN. Residues 579–591 show a composition bias toward basic and acidic residues; the sequence is LRGEKKEANHSEG. Ser653 carries the post-translational modification Phosphoserine. Thr661 carries the post-translational modification Phosphothreonine. Ser664 is modified (phosphoserine). Residues 691–700 show a composition bias toward basic and acidic residues; it reads DTRETSEEMQ. Residues Ser798, Ser834, Ser868, Ser881, Ser1052, and Ser1126 each carry the phosphoserine modification. A disordered region spans residues 1118 to 1171; it reads REQPGEEYSEEEESVLKNSDVEPTANGTDVADEDDNPSSESALNEEWHSDNSDG.

The protein belongs to the protein kinase superfamily. NEK Ser/Thr protein kinase family. NIMA subfamily. Binds to CBY2. Found in a complex with CFAP410, NEK1 and SPATA7. Interacts with CFAP410. Interacts (via Ser-1052 phosphorylated form) with 14-3-3 proteins. Mg(2+) is required as a cofactor. In terms of tissue distribution, high fetal expression in the brain and kidney.

The protein resides in the nucleus. The protein localises to the cytoplasm. It localises to the cytoskeleton. It is found in the microtubule organizing center. Its subcellular location is the centrosome. The catalysed reaction is L-seryl-[protein] + ATP = O-phospho-L-seryl-[protein] + ADP + H(+). It catalyses the reaction L-threonyl-[protein] + ATP = O-phospho-L-threonyl-[protein] + ADP + H(+). Phosphorylates serines and threonines, but also appears to possess tyrosine kinase activity. Involved in DNA damage checkpoint control and for proper DNA damage repair. In response to injury that includes DNA damage, NEK1 phosphorylates VDAC1 to limit mitochondrial cell death. May be implicated in the control of meiosis. Involved in cilium assembly. This chain is Serine/threonine-protein kinase Nek1 (NEK1), found in Homo sapiens (Human).